Consider the following 346-residue polypeptide: Uroporphyrinogen decarboxylase (346 aa).

Substrate-binding positions include R26–R30, F45, D76, Y153, S208, and H323.

The protein belongs to the uroporphyrinogen decarboxylase family. In terms of assembly, homodimer.

The protein localises to the cytoplasm. It carries out the reaction uroporphyrinogen III + 4 H(+) = coproporphyrinogen III + 4 CO2. It participates in porphyrin-containing compound metabolism; protoporphyrin-IX biosynthesis; coproporphyrinogen-III from 5-aminolevulinate: step 4/4. Catalyzes the decarboxylation of four acetate groups of uroporphyrinogen-III to yield coproporphyrinogen-III. This Prochlorococcus marinus subsp. pastoris (strain CCMP1986 / NIES-2087 / MED4) protein is Uroporphyrinogen decarboxylase.